Consider the following 160-residue polypeptide: Transcription elongation factor GreA (160 aa).

Residues 4–70 (QKQYPMTQEG…IEQDIQRIEH (67 aa)) adopt a coiled-coil conformation.

Belongs to the GreA/GreB family.

Its function is as follows. Necessary for efficient RNA polymerase transcription elongation past template-encoded arresting sites. The arresting sites in DNA have the property of trapping a certain fraction of elongating RNA polymerases that pass through, resulting in locked ternary complexes. Cleavage of the nascent transcript by cleavage factors such as GreA or GreB allows the resumption of elongation from the new 3'terminus. GreA releases sequences of 2 to 3 nucleotides. The protein is Transcription elongation factor GreA of Staphylococcus carnosus (strain TM300).